The following is a 452-amino-acid chain: MGRRYFGTDGIRGKVGDAPITPDFVLRLGYAAGKVLASAPGRAASGARPTVLIGKDTRVSGYMLEAALEAGFSAAGVDVMLAGPMPTPGVAYLTRALRLSAGVVISASHNPYHDNGIKFFSADGNKLPDETEAEIEAWLDKSLDCAPSDGLGKARRLDDAAGRYIEFCKSTFPAAFDLRGMKLVVDCAHGAAYQVAPHVFHELGADVIPIGVAPNGFNINDGVGATAPDALMRAVRANHADLGIALDGDADRLLVVDHTGRLYNGDELLYVLVKDRIATNGQVEGAVGTLMTNLAVEVALKDAGVQFVRAAVGDRYVLEQLRERGWQLGAEGSGHILSLDRHSTGDGIVSALLVLAALKRSGKTLAQMLEGVTLFPQKLINVRMKPGADWKGSDAIRRAIGSAEQALAGSGRVLIRASGTEPVLRVMVEARHAADANHHAEAIADAVKQATA.

S108 acts as the Phosphoserine intermediate in catalysis. 4 residues coordinate Mg(2+): S108, D247, D249, and D251. Residue S108 is modified to Phosphoserine.

Belongs to the phosphohexose mutase family. It depends on Mg(2+) as a cofactor. Activated by phosphorylation.

The catalysed reaction is alpha-D-glucosamine 1-phosphate = D-glucosamine 6-phosphate. In terms of biological role, catalyzes the conversion of glucosamine-6-phosphate to glucosamine-1-phosphate. This is Phosphoglucosamine mutase from Burkholderia thailandensis (strain ATCC 700388 / DSM 13276 / CCUG 48851 / CIP 106301 / E264).